We begin with the raw amino-acid sequence, 66 residues long: Large ribosomal subunit protein uL30 (66 aa).

The protein belongs to the universal ribosomal protein uL30 family. Part of the 50S ribosomal subunit.

The sequence is that of Large ribosomal subunit protein uL30 from Brucella anthropi (strain ATCC 49188 / DSM 6882 / CCUG 24695 / JCM 21032 / LMG 3331 / NBRC 15819 / NCTC 12168 / Alc 37) (Ochrobactrum anthropi).